The primary structure comprises 429 residues: Serine hydroxymethyltransferase (429 aa).

Residues Leu126 and 130-132 (GHL) each bind (6S)-5,6,7,8-tetrahydrofolate. Lys235 bears the N6-(pyridoxal phosphate)lysine mark. A (6S)-5,6,7,8-tetrahydrofolate-binding site is contributed by 359-361 (SPF).

Belongs to the SHMT family. In terms of assembly, homodimer. The cofactor is pyridoxal 5'-phosphate.

It localises to the cytoplasm. The enzyme catalyses (6R)-5,10-methylene-5,6,7,8-tetrahydrofolate + glycine + H2O = (6S)-5,6,7,8-tetrahydrofolate + L-serine. The protein operates within one-carbon metabolism; tetrahydrofolate interconversion. Its pathway is amino-acid biosynthesis; glycine biosynthesis; glycine from L-serine: step 1/1. Its function is as follows. Catalyzes the reversible interconversion of serine and glycine with tetrahydrofolate (THF) serving as the one-carbon carrier. This reaction serves as the major source of one-carbon groups required for the biosynthesis of purines, thymidylate, methionine, and other important biomolecules. Also exhibits THF-independent aldolase activity toward beta-hydroxyamino acids, producing glycine and aldehydes, via a retro-aldol mechanism. The polypeptide is Serine hydroxymethyltransferase (Prochlorococcus marinus (strain MIT 9313)).